The primary structure comprises 88 residues: Sm-like protein LSM5 (88 aa).

The residue at position 2 (Ala-2) is an N-acetylalanine. A Sm domain is found at 9-84 (LPSELIDRCI…IAILVPGGSP (76 aa)).

Belongs to the snRNP Sm proteins family. As to quaternary structure, component of the heptameric LSM1-LSM7 complex that forms a seven-membered ring structure with a donut shape. The LSM subunits are arranged in the order LSM1, LSM2, LSM3, LSM6, LSM5, LSM7 and LSM4. Component of the heptameric LSM2-LSM8 complex that forms a seven-membered ring structure with a donut shape. The LSM subunits are arranged in the order LSM8, LSM2, LSM3, LSM6, LSM5, LSM7 and LSM4. LSM2 subunit interacts only with its two neighboring subunits, LSM6A or LSM6B and LSM7. As to expression, expressed in roots, leaves, stems, flowers and siliques.

Its subcellular location is the cytoplasm. It is found in the nucleus. Functionally, component of LSM protein complexes, which are involved in RNA processing. Component of the cytoplasmic LSM1-LSM7 complex which is involved in mRNA degradation by promoting decapping and leading to accurate 5'-3' mRNA decay. The cytoplasmic LSM1-LSM7 complex regulates developmental gene expression by the decapping of specific development-related transcripts. Component of the nuclear LSM2-LSM8 complex which is involved splicing nuclear mRNAs. LSM2-LSM8 binds directly to the U6 small nuclear RNAs (snRNAs) and is essential for accurate splicing of selected development-related mRNAs through the stabilization of the spliceosomal U6 snRNA. Plays a critical role in the regulation of development-related gene expression. Involved in the control of plant sensitivity to abscisic acid (ABA) and drought. Functions with ABH1 as negative regulator of ABA signaling in guard cells. Required for regulation of splicing efficiency of many stress-responsive genes under stress conditions. In Arabidopsis thaliana (Mouse-ear cress), this protein is Sm-like protein LSM5.